Reading from the N-terminus, the 102-residue chain is 10 kDa heat shock protein, mitochondrial (102 aa).

Ala-2 carries the N-acetylalanine modification. Lys-8 carries the N6-acetyllysine modification. Lys-28 carries the N6-succinyllysine modification. Lys-40 bears the N6-acetyllysine; alternate mark. N6-malonyllysine; alternate is present on residues Lys-40, Lys-54, and Lys-56. An N6-succinyllysine; alternate mark is found at Lys-40, Lys-54, Lys-56, Lys-66, and Lys-70. N6-acetyllysine; alternate occurs at positions 56, 66, and 70. Thr-79 is subject to Phosphothreonine. N6-acetyllysine; alternate is present on residues Lys-80 and Lys-86. N6-succinyllysine; alternate is present on residues Lys-80 and Lys-86. Lys-99 is modified (N6-acetyllysine).

The protein belongs to the GroES chaperonin family. In terms of assembly, homoheptamer arranged in a ring structure. 2 heptameric Hsp10 rings interact with a Hsp60 tetradecamer in the structure of a back-to-back double heptameric ring to form the symmetrical football complex.

Its subcellular location is the mitochondrion matrix. In terms of biological role, co-chaperonin implicated in mitochondrial protein import and macromolecular assembly. Together with Hsp60, facilitates the correct folding of imported proteins. May also prevent misfolding and promote the refolding and proper assembly of unfolded polypeptides generated under stress conditions in the mitochondrial matrix. The functional units of these chaperonins consist of heptameric rings of the large subunit Hsp60, which function as a back-to-back double ring. In a cyclic reaction, Hsp60 ring complexes bind one unfolded substrate protein per ring, followed by the binding of ATP and association with 2 heptameric rings of the co-chaperonin Hsp10. This leads to sequestration of the substrate protein in the inner cavity of Hsp60 where, for a certain period of time, it can fold undisturbed by other cell components. Synchronous hydrolysis of ATP in all Hsp60 subunits results in the dissociation of the chaperonin rings and the release of ADP and the folded substrate protein. The sequence is that of 10 kDa heat shock protein, mitochondrial (HSPE1) from Bos taurus (Bovine).